Here is a 738-residue protein sequence, read N- to C-terminus: Polyphosphate kinase (738 aa).

The segment at 1–48 is disordered; it reads MIGNDRWVTEIETGPVTEARPDTNAREPGDRTPAAPPAATPAATTDQL. Over residues 19-30 the composition is skewed to basic and acidic residues; the sequence is ARPDTNAREPGD. Asn91 is an ATP binding site. Arg427 and Arg457 together coordinate Mg(2+). His487 acts as the Phosphohistidine intermediate in catalysis. Positions 520, 620, and 648 each coordinate ATP.

This sequence belongs to the polyphosphate kinase 1 (PPK1) family. The cofactor is Mg(2+). Post-translationally, an intermediate of this reaction is the autophosphorylated ppk in which a phosphate is covalently linked to a histidine residue through a N-P bond.

The catalysed reaction is [phosphate](n) + ATP = [phosphate](n+1) + ADP. Functionally, catalyzes the reversible transfer of the terminal phosphate of ATP to form a long-chain polyphosphate (polyP). This chain is Polyphosphate kinase, found in Mycobacterium ulcerans (strain Agy99).